Reading from the N-terminus, the 106-residue chain is ATP-dependent Clp protease adapter protein ClpS (106 aa).

Belongs to the ClpS family. As to quaternary structure, binds to the N-terminal domain of the chaperone ClpA.

Its function is as follows. Involved in the modulation of the specificity of the ClpAP-mediated ATP-dependent protein degradation. The protein is ATP-dependent Clp protease adapter protein ClpS of Nocardia farcinica (strain IFM 10152).